The chain runs to 168 residues: Shikimate kinase (168 aa).

An ATP-binding site is contributed by 11-16 (GAGKTT). Residue T15 coordinates Mg(2+). Residues D33, R57, and G78 each contribute to the substrate site. R118 serves as a coordination point for ATP. Residue R136 participates in substrate binding. An ATP-binding site is contributed by R153.

It belongs to the shikimate kinase family. Monomer. It depends on Mg(2+) as a cofactor.

Its subcellular location is the cytoplasm. It catalyses the reaction shikimate + ATP = 3-phosphoshikimate + ADP + H(+). The protein operates within metabolic intermediate biosynthesis; chorismate biosynthesis; chorismate from D-erythrose 4-phosphate and phosphoenolpyruvate: step 5/7. Functionally, catalyzes the specific phosphorylation of the 3-hydroxyl group of shikimic acid using ATP as a cosubstrate. The protein is Shikimate kinase of Enterococcus faecalis (strain ATCC 700802 / V583).